A 165-amino-acid chain; its full sequence is Sec-independent protein translocase protein TatB (165 aa).

Residues 1–21 (MFDVSFTELIVIGVVALIVLG) traverse the membrane as a helical segment. The span at 67-84 (DSTAQDVNQSLRSATDSL) shows a compositional bias: polar residues. Residues 67–165 (DSTAQDVNQS…PKSPSTGNAT (99 aa)) are disordered. The segment covering 127 to 159 (KLPGTPATLPATAAAEPTPAAPAASQAEAPKSP) has biased composition (low complexity).

The protein belongs to the TatB family. The Tat system comprises two distinct complexes: a TatABC complex, containing multiple copies of TatA, TatB and TatC subunits, and a separate TatA complex, containing only TatA subunits. Substrates initially bind to the TatABC complex, which probably triggers association of the separate TatA complex to form the active translocon.

It is found in the cell inner membrane. Part of the twin-arginine translocation (Tat) system that transports large folded proteins containing a characteristic twin-arginine motif in their signal peptide across membranes. Together with TatC, TatB is part of a receptor directly interacting with Tat signal peptides. TatB may form an oligomeric binding site that transiently accommodates folded Tat precursor proteins before their translocation. In Bordetella avium (strain 197N), this protein is Sec-independent protein translocase protein TatB.